The sequence spans 211 residues: tRNA (guanosine(18)-2'-O)-methyltransferase (211 aa).

The S-adenosyl-L-methionine site is built by threonine 103, isoleucine 146, and leucine 155.

It belongs to the class IV-like SAM-binding methyltransferase superfamily. RNA methyltransferase TrmH family. In terms of assembly, homodimer.

It catalyses the reaction guanosine(18) in tRNA + S-adenosyl-L-methionine = 2'-O-methylguanosine(18) in tRNA + S-adenosyl-L-homocysteine + H(+). Catalyzes the 2'-O methylation of guanosine at position 18 in tRNA. Type II methylase, which methylates only a subset of tRNA species. The chain is tRNA (guanosine(18)-2'-O)-methyltransferase from Aquifex aeolicus (strain VF5).